A 474-amino-acid polypeptide reads, in one-letter code: MSVFPESFLWGGALAANQSEGAFREGDKGLTTVDMIPHGEHRMAVKLGLEKRFQLRDDEFYPSHEATDFYHRYKEDIALMAEMGFKVFRTSIAWSRLFPQGDEITPNQQGIAFYRSVFEECKKYGIEPLVTLCHFDVPMHLVTEYGSWRNRKLVEFFSRYARTCFEAFDGLVKYWLTFNEINIMLHSPFSGAGLVFEEGENQDQVKYQAAHHQLVASALATKIAHEVNPQNQVGCMLAGGNFYPYSCKPEDVWAALEKDRENLFFIDVQARGTYPAYSARVFREKGVTINKAPGDDEILKNTVDFVSFSYYASRCASAEMNANNSSAANVVKSLRNPYLQVSDWGWGIDPLGLRITMNMMYDRYQKPLFLVENGLGAKDEFAANGEINDDYRISYLREHIRAMGEAIADGIPLMGYTTWGCIDLVSASTGEMSKRYGFVFVDRDDAGNGTLTRTRKKSFWWYKKVIASNGEDLE.

Residue E180 is the Proton donor of the active site. E372 serves as the catalytic Nucleophile.

It belongs to the glycosyl hydrolase 1 family.

It catalyses the reaction 6-phospho-beta-D-glucosyl-(1-&gt;4)-D-glucose + H2O = D-glucose 6-phosphate + D-glucose. In terms of biological role, can hydrolyze salicin, cellobiose, and probably arbutin. This chain is 6-phospho-beta-glucosidase AscB (ascB), found in Escherichia coli (strain K12).